We begin with the raw amino-acid sequence, 226 residues long: Phosphoglycolate phosphatase (226 aa).

Residue D9 is the Nucleophile of the active site. 2 residues coordinate Mg(2+): D9 and D11. Residue K150 coordinates substrate. D173 and D177 together coordinate Mg(2+).

This sequence belongs to the archaeal SPP-like hydrolase family. Requires Mg(2+) as cofactor.

It carries out the reaction 2-phosphoglycolate + H2O = glycolate + phosphate. Its function is as follows. Catalyzes the dephosphorylation of 2-phosphoglycolate. The polypeptide is Phosphoglycolate phosphatase (Methanosarcina mazei (strain ATCC BAA-159 / DSM 3647 / Goe1 / Go1 / JCM 11833 / OCM 88) (Methanosarcina frisia)).